Reading from the N-terminus, the 324-residue chain is Putative divalent cation/proton antiporter TMEM165 (324 aa).

The N-terminal stretch at 1–33 (MAAAAPGNGRASAPRLLLLFLVPLLWAPAAVRA) is a signal peptide. Topologically, residues 34 to 89 (GPDEDLSHRNKEPPAPAQQLQPQPVAVQGPEPARVEKIFTPAAPVHTNKEDPATQT) are lumenal. Over residues 35–45 (PDEDLSHRNKE) the composition is skewed to basic and acidic residues. The interval 35–59 (PDEDLSHRNKEPPAPAQQLQPQPVA) is disordered. Residues 50–59 (AQQLQPQPVA) are compositionally biased toward low complexity. A helical transmembrane segment spans residues 90 to 110 (NLGFIHAFVAAISVIIVSELG). Residues 111-126 (DKTFFIAAIMAMRYNR) lie on the Cytoplasmic side of the membrane. The chain crosses the membrane as a helical span at residues 127 to 147 (LTVLAGAMLALGLMTCLSVLF). The Lumenal segment spans residues 148–151 (GYAT). The chain crosses the membrane as a helical span at residues 152-172 (TVIPRVYTYYVSTVLFAIFGI). At 173-228 (RMLREGLKMSPDEGQEELEEVQAELKKKDEEFQRTKLLNGPGDVETGTSITVPQKK) the chain is on the cytoplasmic side. The stretch at 184–211 (DEGQEELEEVQAELKKKDEEFQRTKLLN) forms a coiled coil. A helical transmembrane segment spans residues 229-249 (WLHFISPIFVQALTLTFLAEW). At 250–267 (GDRSQLTTIVLAAREDPY) the chain is on the lumenal side. The chain crosses the membrane as a helical span at residues 268–288 (GVAVGGTVGHCLCTGLAVIGG). The Cytoplasmic segment spans residues 289–299 (RMIAQKISVRT). Residues 300–320 (VTIIGGIVFLAFAFSALFISP) form a helical membrane-spanning segment. At 321–324 (DSGF) the chain is on the lumenal side.

Belongs to the GDT1 family. As to expression, ubiquitously expressed.

Its subcellular location is the golgi apparatus membrane. It carries out the reaction Ca(2+)(in) + n H(+)(out) = Ca(2+)(out) + n H(+)(in). The catalysed reaction is Mn(2+)(in) + n H(+)(out) = Mn(2+)(out) + n H(+)(in). Its function is as follows. Putative divalent cation:proton antiporter that exchanges calcium or manganese ions for protons across the Golgi membrane. Mediates the reversible transport of calcium or manganese to the Golgi lumen driven by the proton gradient and possibly the membrane potential generated by V-ATPase. Provides calcium or manganese cofactors to resident Golgi enzymes and contributes to the maintenance of an acidic luminal Golgi pH required for proper functioning of the secretory pathway. Promotes Ca(2+) storage within the Golgi lumen of the mammary epithelial cells to be then secreted into milk. The transport mechanism and stoichiometry remains to be elucidated. This chain is Putative divalent cation/proton antiporter TMEM165, found in Homo sapiens (Human).